The following is a 200-amino-acid chain: MTDVALIDAGGANLGSVRYALERLGVDARLVRDAAGLQGAQRVILPGVGAAPEAMSRLRAQGLVEPLRELQVPLIGICLGMQLLFEHSEEGDVECLGLLPGIVRHMTPALGIRIPHMGWNQLVPMRDSALLAGLPERASAYFVHGYAAPVTADTVAACDHGGLFTAVVQNGLRCGAQFHPERSAETGARILRNFLEMSFP.

Positions 3–200 (DVALIDAGGA…LRNFLEMSFP (198 aa)) constitute a Glutamine amidotransferase type-1 domain. The active-site Nucleophile is cysteine 78. Residues histidine 179 and glutamate 181 contribute to the active site.

As to quaternary structure, heterodimer of HisH and HisF.

It localises to the cytoplasm. The catalysed reaction is 5-[(5-phospho-1-deoxy-D-ribulos-1-ylimino)methylamino]-1-(5-phospho-beta-D-ribosyl)imidazole-4-carboxamide + L-glutamine = D-erythro-1-(imidazol-4-yl)glycerol 3-phosphate + 5-amino-1-(5-phospho-beta-D-ribosyl)imidazole-4-carboxamide + L-glutamate + H(+). It catalyses the reaction L-glutamine + H2O = L-glutamate + NH4(+). Its pathway is amino-acid biosynthesis; L-histidine biosynthesis; L-histidine from 5-phospho-alpha-D-ribose 1-diphosphate: step 5/9. IGPS catalyzes the conversion of PRFAR and glutamine to IGP, AICAR and glutamate. The HisH subunit catalyzes the hydrolysis of glutamine to glutamate and ammonia as part of the synthesis of IGP and AICAR. The resulting ammonia molecule is channeled to the active site of HisF. The chain is Imidazole glycerol phosphate synthase subunit HisH from Xanthomonas axonopodis pv. citri (strain 306).